Reading from the N-terminus, the 889-residue chain is Alanine--tRNA ligase (889 aa).

Zn(2+)-binding residues include His564, His568, Cys671, and His675.

This sequence belongs to the class-II aminoacyl-tRNA synthetase family. Zn(2+) serves as cofactor.

The protein localises to the cytoplasm. The catalysed reaction is tRNA(Ala) + L-alanine + ATP = L-alanyl-tRNA(Ala) + AMP + diphosphate. In terms of biological role, catalyzes the attachment of alanine to tRNA(Ala) in a two-step reaction: alanine is first activated by ATP to form Ala-AMP and then transferred to the acceptor end of tRNA(Ala). Also edits incorrectly charged Ser-tRNA(Ala) and Gly-tRNA(Ala) via its editing domain. This is Alanine--tRNA ligase from Pelagibacter ubique (strain HTCC1062).